We begin with the raw amino-acid sequence, 410 residues long: MSSDPNFSLTSFLECLNEIEHEFLRDKEENRPIIVRKLRELQQKTPNHVADLAHDSKTIEQIHQTAHRIKVAVKTFIRIDQKFVSLCSEVVHGTSKVMEEFNVVSPAVVCRNLSEDLPAYHMRKHFLLTLDNPYPTQEEKQNLVRLTNESTVRVGSSNPARPPLEVHQLTLWFINARRRSGWSHILKKFAREDRSRMKHLVRAKLSSSNQSTPPSPTSEYPSNNLDDFLSDNLGRPLTPADKQQFEDDWASMISWIKYGVKEKVGDWVYDLCAANKKTPKPGMPRPVTTVTKRQPARKTKPAAKPKSRTANPRASTTPSIDSTLDSSKLESTPELSMCSTADTSFSTFGSSLSMSHYNPFQDGNDILQSPTVKARGNRKVKALPKRAGKQQPDEVDNGKIPFLCLSVAFV.

Residues 1 to 110 are variable domain between B alleles; the sequence is MSSDPNFSLT…FNVVSPAVVC (110 aa). A DNA-binding region (homeobox; TALE-type) is located at residues 107–184; it reads AVVCRNLSED…NARRRSGWSH (78 aa). The segment at 111–410 is highly conserved between B alleles; the sequence is RNLSEDLPAY…PFLCLSVAFV (300 aa). Disordered regions lie at residues 201–241, 275–336, and 366–395; these read VRAK…TPAD, NKKT…PELS, and ILQS…PDEV. Positions 206 to 222 are enriched in low complexity; sequence SSSNQSTPPSPTSEYPS. A Nuclear localization signal motif is present at residues 276–308; that stretch reads KKTPKPGMPRPVTTVTKRQPARKTKPAAKPKSR. Residues 294–307 are compositionally biased toward basic residues; that stretch reads QPARKTKPAAKPKS. Positions 312-336 are enriched in polar residues; sequence PRASTTPSIDSTLDSSKLESTPELS. Residues 333–410 are not essential for B5 function; that stretch reads PELSMCSTAD…PFLCLSVAFV (78 aa). A compositionally biased stretch (basic residues) spans 375–388; the sequence is RGNRKVKALPKRAG.

Belongs to the TALE/M-ATYP homeobox family.

The protein localises to the nucleus. Functionally, the B locus has at least 25 alleles, and any combination of two different B alleles yields a multimeric regulatory protein, that activates genes responsible for the pathogenicity and for the sexual development of the fungus within the corn plant. The protein is Mating-type locus allele B5 protein of Mycosarcoma maydis (Corn smut fungus).